A 141-amino-acid chain; its full sequence is Large ribosomal subunit protein uL11 (141 aa).

It belongs to the universal ribosomal protein uL11 family. As to quaternary structure, part of the ribosomal stalk of the 50S ribosomal subunit. Interacts with L10 and the large rRNA to form the base of the stalk. L10 forms an elongated spine to which L12 dimers bind in a sequential fashion forming a multimeric L10(L12)X complex. One or more lysine residues are methylated.

Forms part of the ribosomal stalk which helps the ribosome interact with GTP-bound translation factors. The chain is Large ribosomal subunit protein uL11 from Clostridium acetobutylicum (strain ATCC 824 / DSM 792 / JCM 1419 / IAM 19013 / LMG 5710 / NBRC 13948 / NRRL B-527 / VKM B-1787 / 2291 / W).